The chain runs to 254 residues: Triosephosphate isomerase (254 aa).

9–11 (NWK) serves as a coordination point for substrate. Histidine 96 serves as the catalytic Electrophile. Catalysis depends on glutamate 169, which acts as the Proton acceptor. Substrate is bound by residues glycine 175, serine 215, and 236-237 (GG).

The protein belongs to the triosephosphate isomerase family. As to quaternary structure, homodimer.

Its subcellular location is the cytoplasm. The enzyme catalyses D-glyceraldehyde 3-phosphate = dihydroxyacetone phosphate. It participates in carbohydrate biosynthesis; gluconeogenesis. It functions in the pathway carbohydrate degradation; glycolysis; D-glyceraldehyde 3-phosphate from glycerone phosphate: step 1/1. Functionally, involved in the gluconeogenesis. Catalyzes stereospecifically the conversion of dihydroxyacetone phosphate (DHAP) to D-glyceraldehyde-3-phosphate (G3P). The protein is Triosephosphate isomerase of Borrelia duttonii (strain Ly).